The following is a 285-amino-acid chain: Foldase protein PrsA 2 (285 aa).

The first 20 residues, 1 to 20 (MRGKHIFIITALISILMLSA), serve as a signal peptide directing secretion. A lipid anchor (N-palmitoyl cysteine) is attached at Cys21. Cys21 is lipidated: S-diacylglycerol cysteine. Residues 134–224 (KPEIKASHIL…NGYHVIKLTD (91 aa)) enclose the PpiC domain.

This sequence belongs to the PrsA family.

Its subcellular location is the cell membrane. It catalyses the reaction [protein]-peptidylproline (omega=180) = [protein]-peptidylproline (omega=0). In terms of biological role, plays a major role in protein secretion by helping the post-translocational extracellular folding of several secreted proteins. In Bacillus cereus (strain ATCC 14579 / DSM 31 / CCUG 7414 / JCM 2152 / NBRC 15305 / NCIMB 9373 / NCTC 2599 / NRRL B-3711), this protein is Foldase protein PrsA 2 (prsA2).